A 331-amino-acid polypeptide reads, in one-letter code: Tungstate uptake system ATP-binding protein TupC (331 aa).

Residues 2 to 230 enclose the ABC transporter domain; sequence IEISNLFFNY…NQGVKFCNFI (229 aa). Residue 34–41 participates in ATP binding; sequence GANGSGKS.

It belongs to the ABC transporter superfamily. The complex is composed of two ATP-binding proteins (TupC), two transmembrane proteins (TupB) and a solute-binding protein (TupA).

It carries out the reaction tungstate(in) + ATP + H2O = tungstate(out) + ADP + phosphate + H(+). Functionally, part of an ABC transporter complex involved in ultra-high affinity tungstate uptake. Probably responsible for energy coupling to the transport system. This Campylobacter jejuni subsp. jejuni serotype O:2 (strain ATCC 700819 / NCTC 11168) protein is Tungstate uptake system ATP-binding protein TupC.